The primary structure comprises 261 residues: Ribonuclease PH (261 aa).

Residues Arg88 and 126 to 128 (GTR) each bind phosphate. The segment at 242-261 (PYPGVLPEPKNPEPKKKFGA) is disordered. Residues 251-261 (KNPEPKKKFGA) are compositionally biased toward basic and acidic residues.

It belongs to the RNase PH family. Homohexameric ring arranged as a trimer of dimers.

The catalysed reaction is tRNA(n+1) + phosphate = tRNA(n) + a ribonucleoside 5'-diphosphate. Its function is as follows. Phosphorolytic 3'-5' exoribonuclease that plays an important role in tRNA 3'-end maturation. Removes nucleotide residues following the 3'-CCA terminus of tRNAs; can also add nucleotides to the ends of RNA molecules by using nucleoside diphosphates as substrates, but this may not be physiologically important. Probably plays a role in initiation of 16S rRNA degradation (leading to ribosome degradation) during starvation. This is Ribonuclease PH from Rhodococcus erythropolis (strain PR4 / NBRC 100887).